A 450-amino-acid polypeptide reads, in one-letter code: Membrane-bound lytic murein transglycosylase F 2 (450 aa).

An N-terminal signal peptide occupies residues 1-20 (MRTWIAILAVVLVLLLNACT). Residues 21 to 261 (DGPEDGPRLE…AMENRYYTYV (241 aa)) are non-LT domain. The tract at residues 262 to 450 (GEFDFVDLRA…YRDVIRQAFE (189 aa)) is LT domain. Glutamate 308 is a catalytic residue.

The protein in the N-terminal section; belongs to the bacterial solute-binding protein 3 family. In the C-terminal section; belongs to the transglycosylase Slt family.

It is found in the cell outer membrane. The catalysed reaction is Exolytic cleavage of the (1-&gt;4)-beta-glycosidic linkage between N-acetylmuramic acid (MurNAc) and N-acetylglucosamine (GlcNAc) residues in peptidoglycan, from either the reducing or the non-reducing ends of the peptidoglycan chains, with concomitant formation of a 1,6-anhydrobond in the MurNAc residue.. In terms of biological role, murein-degrading enzyme that degrades murein glycan strands and insoluble, high-molecular weight murein sacculi, with the concomitant formation of a 1,6-anhydromuramoyl product. Lytic transglycosylases (LTs) play an integral role in the metabolism of the peptidoglycan (PG) sacculus. Their lytic action creates space within the PG sacculus to allow for its expansion as well as for the insertion of various structures such as secretion systems and flagella. This Alkalilimnicola ehrlichii (strain ATCC BAA-1101 / DSM 17681 / MLHE-1) protein is Membrane-bound lytic murein transglycosylase F 2.